We begin with the raw amino-acid sequence, 239 residues long: Phosducin-like protein 3 (239 aa).

Positions 16–37 are disordered; that stretch reads KKGILPPKETPVEEEEDEQLHL. The 174-residue stretch at 28–201 folds into the Phosducin domain; the sequence is EEEEDEQLHL…LEWRLSESGA (174 aa). The residue at position 41 (S41) is a Phosphoserine. Positions 89–239 are thioredoxin fold; it reads FGELKEISGQ…RDGEEDSDED (151 aa). Residues 217–227 are compositionally biased toward polar residues; it reads QLMTSIRCSAN. A disordered region spans residues 217 to 239; that stretch reads QLMTSIRCSANTHRDGEEDSDED.

This sequence belongs to the phosducin family. As to quaternary structure, interacts (via thioredoxin fold region) with kdr/vegfr2 (via juxtamembrane domain). Expressed in endothelial cells.

The protein resides in the cytoplasm. It localises to the perinuclear region. It is found in the endoplasmic reticulum. Functionally, acts as a chaperone for the angiogenic VEGF receptor KDR/VEGFR2, increasing its abundance by inhibiting its ubiquitination and degradation. Inhibits the folding activity of the chaperonin-containing T-complex (CCT) which leads to inhibition of cytoskeletal actin folding. Acts as a chaperone during heat shock alongside HSP90 and HSP40/70 chaperone complexes. Modulates the activation of caspases during apoptosis. This chain is Phosducin-like protein 3, found in Danio rerio (Zebrafish).